A 359-amino-acid polypeptide reads, in one-letter code: Outer membrane protein A (359 aa).

The N-terminal stretch at 1-21 (MKKTAIALAVALAGFATVAQA) is a signal peptide. A run of 8 beta stranded transmembrane segments spans residues 27–37 (TWYTGAKLGWS), 62–73 (QLGAGAFLGYQA), 77–85 (LGFELGYDW), 103–114 (QGVQLAAKLSYP), 119–127 (LDIYTRLGG), 154–163 (PLAAVGVEYA), 168–175 (WATRLDYQ), and 194–202 (MLSLGVSYR). 5 tandem repeats follow at residues 210-211 (AP), 212-213 (AP), 214-215 (AP), 216-217 (AP), and 218-219 (AP). A 5 X 2 AA tandem repeats of A-P region spans residues 210–219 (APAPAPAPAP). The OmpA-like domain maps to 221-351 (VETKRFTLKS…RVEIEVKGIK (131 aa)). Cys-322 and Cys-336 are disulfide-bonded.

The protein belongs to the outer membrane OOP (TC 1.B.6) superfamily. OmpA family. As to quaternary structure, monomer and homodimer.

It is found in the cell outer membrane. Functionally, with TolR probably plays a role in maintaining the position of the peptidoglycan cell wall in the periplasm. Acts as a porin with low permeability that allows slow penetration of small solutes; an internal gate slows down solute passage. In Serratia marcescens, this protein is Outer membrane protein A.